A 345-amino-acid polypeptide reads, in one-letter code: MRTNDAQMLVLCALADGPLHGYAINAAIEQVSGHRLGPGSLYGALARLEAKQLVRPLEEKGRQRPFCLTPAGRELLEREAHSMARLSGRVFESAVPDEVSYLDQLATTDAARSYKSVMLDALDARPGESALDLGCGPGTDLGTLAKAVSPSGRVIGIDSSQEMVEQARRRTENLPAVEVELGDIHTLPLEDGSIDCARTDRVLQHVADPAQALAEARRVLRPGGRLVMGEPDWDSLTIDYPDLEVSRAYTRHVTDKIVRNGVIGRQLARLALDAGFAVPTVVPITSVFRDAQAADQVLGLQRNTERAVSAGYLPALASQRWLDHLAAGPFFAAVTLYVVVAQATP.

The protein belongs to the methyltransferase superfamily.

This is an uncharacterized protein from Streptomyces fradiae (Streptomyces roseoflavus).